We begin with the raw amino-acid sequence, 167 residues long: Glutathione peroxidase 1 (167 aa).

Cysteine 41 is an active-site residue.

The protein belongs to the glutathione peroxidase family.

It catalyses the reaction 2 glutathione + H2O2 = glutathione disulfide + 2 H2O. In terms of biological role, may constitute a glutathione peroxidase-like protective system against oxidative stresses. The sequence is that of Glutathione peroxidase 1 (GPXHA-1) from Helianthus annuus (Common sunflower).